Here is a 310-residue protein sequence, read N- to C-terminus: Tagatose-6-phosphate kinase (310 aa).

Belongs to the carbohydrate kinase PfkB family. LacC subfamily.

The catalysed reaction is D-tagatofuranose 6-phosphate + ATP = D-tagatofuranose 1,6-bisphosphate + ADP + H(+). The protein operates within carbohydrate metabolism; D-tagatose 6-phosphate degradation; D-glyceraldehyde 3-phosphate and glycerone phosphate from D-tagatose 6-phosphate: step 1/2. In Staphylococcus aureus (strain USA300 / TCH1516), this protein is Tagatose-6-phosphate kinase.